A 293-amino-acid chain; its full sequence is MGRLSSTLCLTFLILATVAFGVPPKKSINVPFGRNYFPTWAFDHIKYLNGGSEVHLVLDKYTGTGFQSKGSYLFGHFSMHIKMVAGDSAGTVTAFYLSSQNSEHDEIDFEFLGNRTGQPYILQTNVFTGGAGNREQRINLWFDPSKDYHSYSVLWNMYQIVFFVDDVPIRVFKNSKDVGVKFPFNQPMKIYSSLWNADDWATRGGLEKTNWEKAPFVASYRGFHVDGCEASVNAKFCETQGKRWWDQKEFQDLDANQYKRLKWVRKRYTIYNYCTDRVRFPVPPPECRRDRDI.

The first 21 residues, 1 to 21, serve as a signal peptide directing secretion; it reads MGRLSSTLCLTFLILATVAFG. The GH16 domain occupies 23–220; it reads PPKKSINVPF…WEKAPFVASY (198 aa). E106 serves as the catalytic Nucleophile. The active-site Proton donor is E110. Xyloglucan is bound at residue E110. N-linked (GlcNAc...) asparagine glycosylation is present at N114. Residues 123–125, 133–135, 199–200, and G204 contribute to the xyloglucan site; these read QTN, NRE, and DW. Cystine bridges form between C228–C237 and C274–C287. R279 is a xyloglucan binding site.

It belongs to the glycosyl hydrolase 16 family. XTH group 1 subfamily. In terms of processing, contains at least one intrachain disulfide bond essential for its enzymatic activity. In terms of tissue distribution, root specific.

It is found in the secreted. The protein resides in the cell wall. It localises to the extracellular space. Its subcellular location is the apoplast. It catalyses the reaction breaks a beta-(1-&gt;4) bond in the backbone of a xyloglucan and transfers the xyloglucanyl segment on to O-4 of the non-reducing terminal glucose residue of an acceptor, which can be a xyloglucan or an oligosaccharide of xyloglucan.. In terms of biological role, catalyzes xyloglucan endohydrolysis (XEH) and/or endotransglycosylation (XET). Cleaves and religates xyloglucan polymers, an essential constituent of the primary cell wall, and thereby participates in cell wall construction of growing tissues. The protein is Probable xyloglucan endotransglucosylase/hydrolase protein 5 (XTH5) of Arabidopsis thaliana (Mouse-ear cress).